A 711-amino-acid chain; its full sequence is Polyribonucleotide nucleotidyltransferase (711 aa).

The Mg(2+) site is built by Asp486 and Asp492. In terms of domain architecture, KH spans 553-612 (PRIHTIKINPDKIKDVIGKGGSVIRALTEETGTTIEIEDDGTVKIAATDGDKAQHAIRRI). Residues 622–690 (GRIYNGKVTR…RQGRVRLSIK (69 aa)) form the S1 motif domain. Residues 689–711 (IKEATEQTPSAAAPEAPAAEQGE) are disordered. The segment covering 694 to 711 (EQTPSAAAPEAPAAEQGE) has biased composition (low complexity).

This sequence belongs to the polyribonucleotide nucleotidyltransferase family. In terms of assembly, component of the RNA degradosome, which is a multiprotein complex involved in RNA processing and mRNA degradation. It depends on Mg(2+) as a cofactor.

The protein resides in the cytoplasm. It catalyses the reaction RNA(n+1) + phosphate = RNA(n) + a ribonucleoside 5'-diphosphate. Functionally, involved in mRNA degradation. Catalyzes the phosphorolysis of single-stranded polyribonucleotides processively in the 3'- to 5'-direction. The protein is Polyribonucleotide nucleotidyltransferase of Klebsiella pneumoniae subsp. pneumoniae (strain ATCC 700721 / MGH 78578).